Reading from the N-terminus, the 123-residue chain is Potassium voltage-gated channel subfamily E member 2 (123 aa).

Asn6 and Asn29 each carry an N-linked (GlcNAc...) asparagine glycan. Residues 49-69 (VILYLMVMIGMFSFIVVAILV) form a helical membrane-spanning segment. Residues 70 to 123 (STVKSKRREHSQHPYHQYIVEDWQEKYKSQILHLEDSKATIHENMGATGFTVSP) are Cytoplasmic-facing.

It belongs to the potassium channel KCNE family. Interacts with KCNB1. Associates with KCNH2/ERG1. May associate with KCNQ2 and KCNQ3. Associates with HCN1 and probably HCN2. Heteromultimer with KCNC2. Interacts with KCNC2. Interacts with KCNQ1. Forms a heterooligomer complex with KCNQ1 that targets to the membrane raft and leading to currents with an apparently instantaneous activation, a rapid deactivation process and a linear current-voltage relationship and decreases the amplitude of the outward current.

The protein resides in the cell membrane. It is found in the apical cell membrane. In terms of biological role, ancillary protein that functions as a regulatory subunit of the voltage-gated potassium (Kv) channel complex composed of pore-forming and potassium-conducting alpha subunits and of regulatory beta subunits. KCNE2 beta subunit modulates the gating kinetics and enhances stability of the channel complex. Alters the gating of the delayed rectifier Kv channel containing KCNB1 alpha subunit. Associates with KCNH2/HERG alpha subunit Kv channel to form the rapidly activating component of the delayed rectifying potassium current (IKr) in heart. May associate with KCNQ2 and/or KCNQ3 alpha subunits to modulate the native M-type current. May associate with HCN1 and HCN2 channel subunits to increase potassium current. Forms a heterooligomer complex with KCNQ1/KVLQT1 alpha subunits which leads to currents with an apparently instantaneous activation, a rapid deactivation process and a linear current-voltage relationship and decreases the amplitude of the outward current. KCNQ1-KCNE2 channel associates with Na(+)-coupled myo-inositol symporter in the apical membrane of choroid plexus epithelium and regulates the myo-inositol gradient between blood and cerebrospinal fluid with an impact on neuron excitability. The sequence is that of Potassium voltage-gated channel subfamily E member 2 from Mus musculus (Mouse).